A 181-amino-acid polypeptide reads, in one-letter code: Adenine phosphoribosyltransferase (181 aa).

It belongs to the purine/pyrimidine phosphoribosyltransferase family. As to quaternary structure, homodimer.

The protein localises to the cytoplasm. The catalysed reaction is AMP + diphosphate = 5-phospho-alpha-D-ribose 1-diphosphate + adenine. It functions in the pathway purine metabolism; AMP biosynthesis via salvage pathway; AMP from adenine: step 1/1. In terms of biological role, catalyzes a salvage reaction resulting in the formation of AMP, that is energically less costly than de novo synthesis. In Vibrio parahaemolyticus serotype O3:K6 (strain RIMD 2210633), this protein is Adenine phosphoribosyltransferase.